The chain runs to 100 residues: Replication restart protein PriB (100 aa).

One can recognise an SSB domain in the interval 1-100 (MTNRIELSGV…VLHADKISQI (100 aa)).

This sequence belongs to the PriB family. In terms of assembly, homodimer. Interacts with PriA and DnaT. Component of the replication restart primosome. Primosome assembly occurs via a 'hand-off' mechanism. PriA binds to replication forks, subsequently PriB then DnaT bind; DnaT then displaces ssDNA to generate the helicase loading substrate.

In terms of biological role, involved in the restart of stalled replication forks, which reloads the replicative helicase on sites other than the origin of replication; the PriA-PriB pathway is the major replication restart pathway. During primosome assembly it facilitates complex formation between PriA and DnaT on DNA; stabilizes PriA on DNA. Stimulates the DNA unwinding activity of PriA helicase. This is Replication restart protein PriB from Vibrio cholerae serotype O1 (strain ATCC 39315 / El Tor Inaba N16961).